Reading from the N-terminus, the 533-residue chain is Kelch-like protein 33 (533 aa).

Kelch repeat units lie at residues 210–258 (ALVV…ALPA), 273–322 (ELYV…ALDG), 323–369 (KLYA…ILEG), 371–418 (LYVS…ALGG), 419–465 (RLYV…VLQG), and 467–514 (LLVL…ILTL).

The sequence is that of Kelch-like protein 33 (KLHL33) from Homo sapiens (Human).